A 230-amino-acid chain; its full sequence is Large ribosomal subunit protein uL1c (230 aa).

Belongs to the universal ribosomal protein uL1 family. As to quaternary structure, part of the 50S ribosomal subunit.

It localises to the plastid. It is found in the chloroplast. Functionally, binds directly to 23S rRNA. Might be involved in E site tRNA release (Potential). In Phaeodactylum tricornutum (strain CCAP 1055/1), this protein is Large ribosomal subunit protein uL1c (rpl1).